Here is a 418-residue protein sequence, read N- to C-terminus: CinA-like protein (418 aa).

This sequence belongs to the CinA family.

The protein is CinA-like protein of Leptospira interrogans serogroup Icterohaemorrhagiae serovar copenhageni (strain Fiocruz L1-130).